The chain runs to 564 residues: Dihydroxy-acid dehydratase (564 aa).

Asp80 serves as a coordination point for Mg(2+). Cys121 is a [2Fe-2S] cluster binding site. Mg(2+) contacts are provided by Asp122 and Lys123. Lys123 carries the post-translational modification N6-carboxylysine. Cys194 lines the [2Fe-2S] cluster pocket. Glu447 provides a ligand contact to Mg(2+). Ser473 serves as the catalytic Proton acceptor.

Belongs to the IlvD/Edd family. In terms of assembly, homodimer. The cofactor is [2Fe-2S] cluster. It depends on Mg(2+) as a cofactor.

The catalysed reaction is (2R)-2,3-dihydroxy-3-methylbutanoate = 3-methyl-2-oxobutanoate + H2O. It carries out the reaction (2R,3R)-2,3-dihydroxy-3-methylpentanoate = (S)-3-methyl-2-oxopentanoate + H2O. The protein operates within amino-acid biosynthesis; L-isoleucine biosynthesis; L-isoleucine from 2-oxobutanoate: step 3/4. Its pathway is amino-acid biosynthesis; L-valine biosynthesis; L-valine from pyruvate: step 3/4. Functionally, functions in the biosynthesis of branched-chain amino acids. Catalyzes the dehydration of (2R,3R)-2,3-dihydroxy-3-methylpentanoate (2,3-dihydroxy-3-methylvalerate) into 2-oxo-3-methylpentanoate (2-oxo-3-methylvalerate) and of (2R)-2,3-dihydroxy-3-methylbutanoate (2,3-dihydroxyisovalerate) into 2-oxo-3-methylbutanoate (2-oxoisovalerate), the penultimate precursor to L-isoleucine and L-valine, respectively. This Listeria innocua serovar 6a (strain ATCC BAA-680 / CLIP 11262) protein is Dihydroxy-acid dehydratase.